Here is a 199-residue protein sequence, read N- to C-terminus: Superoxide dismutase [Mn/Fe] (199 aa).

Fe(3+) is bound by residues H27, H81, D161, and H165. Positions 27, 81, 161, and 165 each coordinate Mn(2+).

This sequence belongs to the iron/manganese superoxide dismutase family. Homodimer. It depends on Mn(2+) as a cofactor. Fe(3+) is required as a cofactor.

It catalyses the reaction 2 superoxide + 2 H(+) = H2O2 + O2. Destroys superoxide anion radicals which are normally produced within the cells and which are toxic to biological systems. Catalyzes the dismutation of superoxide anion radicals into O2 and H2O2 by successive reduction and oxidation of the transition metal ion at the active site. Also contributes to the inhibition of lipid oxidation. Manganese-preferring enzyme, less active with iron than with manganese. This is Superoxide dismutase [Mn/Fe] (sodA) from Staphylococcus xylosus.